The sequence spans 611 residues: Lanthanide-dependent methanol dehydrogenase (611 aa).

The signal sequence occupies residues 1-34 (MTVKLKKPKKYAVAKNATLLAAFGLIGSLSLAKA). A disulfide bond links C138 and C139. R144, T188, S203, G204, and G205 together coordinate pyrroloquinoline quinone. Residue E206 coordinates Ce(3+). E206 is a binding site for Eu(3+). Pyrroloquinoline quinone is bound by residues T270 and W272. Residues N290, D333, and D335 each coordinate Ce(3+). Eu(3+) is bound by residues N290, D333, and D335. R360 is a binding site for pyrroloquinoline quinone. C414 and C443 are disulfide-bonded. The pyrroloquinoline quinone site is built by W501 and W566.

The protein belongs to the bacterial PQQ dehydrogenase family. As to quaternary structure, homodimer. Ce(3+) is required as a cofactor. Requires La(3+) as cofactor. Nd(3+) serves as cofactor. The cofactor is Pr(3+). It depends on Eu(3+) as a cofactor. Pyrroloquinoline quinone is required as a cofactor.

The protein resides in the periplasm. It catalyses the reaction 2 Fe(III)-[cytochrome cL] + methanol = 2 Fe(II)-[cytochrome cL] + formaldehyde + 2 H(+). The enzyme catalyses 4 Fe(III)-[cytochrome cL] + methanol + H2O = 4 Fe(II)-[cytochrome cL] + formate + 5 H(+). The catalysed reaction is 2 Fe(III)-[cytochrome cL] + a primary alcohol = 2 Fe(II)-[cytochrome cL] + an aldehyde + 2 H(+). Its pathway is one-carbon metabolism; methanol degradation. Its function is as follows. Catalyzes the oxidation of methanol to formaldehyde or formate in the presence of lanthanides (Ln). Is a key enzyme in methane/methanol metabolism, allowing M.fumariolicum to grow on methane as the sole carbon and energy source. Can also act on other primary alcohols in vitro, such as ethanol, 1-propanol, 1-butanol, and 1-hexanol, but is not able to oxidize secondary alcohols and acetaldehyde. Uses a specific cytochrome cL, encoded by the adjacent gene in the locus, as electron acceptor. The polypeptide is Lanthanide-dependent methanol dehydrogenase (Methylacidiphilum fumariolicum (strain SolV)).